Reading from the N-terminus, the 706-residue chain is Cyclic nucleotide-gated ion channel 18 (706 aa).

Topologically, residues 1-53 are cytoplasmic; it reads MNKIRSLRCLLPETITSASTAASNRGSDGSQFSVLWRHQILDPDSNIVTYWNH. Residues 54 to 74 traverse the membrane as a helical segment; it reads VFLITSILALFLDPFYFYVPY. Residues 75–86 are Extracellular-facing; the sequence is VGGPACLSIDIS. The helical transmembrane segment at 87-107 threads the bilayer; that stretch reads LAATVTFFRTVADIFHLLHIF. Topologically, residues 108–142 are cytoplasmic; it reads MKFRTAFVARSSRVFGRGELVMDSREIAMRYLKTD. Residues 143-163 traverse the membrane as a helical segment; sequence FLIDVAAMLPLPQLVIWLVIP. Residues 164–174 are Extracellular-facing; the sequence is AATNGTANHAN. The chain crosses the membrane as a helical span at residues 175-195; the sequence is STLALIVLVQYIPRSFIIFPL. Topologically, residues 196–217 are cytoplasmic; the sequence is NQRIIKTTGFIAKTAWAGAAYN. A helical membrane pass occupies residues 218–238; sequence LLLYILASHVLGAMWYLSSIG. The Extracellular portion of the chain corresponds to 239-345; the sequence is RQFSCWSNVC…ITTSVYLGET (107 aa). A helical transmembrane segment spans residues 346-366; that stretch reads LFCITICIFGLILFTLLIGNM. At 367–706 the chain is on the cytoplasmic side; it reads QSSLQSMSVR…PDFSIDKEDV (340 aa). A nucleoside 3',5'-cyclic phosphate is bound by residues 449–579 and Glu520; that span reads FFSQ…AFRY. Residues 565–580 are calmodulin-binding; the sequence is FKRLQSKKLQHAFRYY. The 30-residue stretch at 585–614 folds into the IQ domain; sequence RAWGACFVQSAWRRYKRRKLAKELSLHESS. A disordered region spans residues 661 to 706; it reads ANTRRGTNQKASSSSTGKKDGSSTSLKMPQLFKPDEPDFSIDKEDV. The span at 693–706 shows a compositional bias: basic and acidic residues; the sequence is KPDEPDFSIDKEDV.

It belongs to the cyclic nucleotide-gated cation channel (TC 1.A.1.5) family. In terms of assembly, homomultimer. Interacts with CPK32. In terms of tissue distribution, expressed in pollen grains. Not detected in leaves, roots or root hairs.

Its subcellular location is the cell membrane. It is found in the cytoplasmic vesicle membrane. Its function is as follows. Cyclic nucleotide-gated ion channel required for directional pollen tube growth into the transmitting tract. Acts as a Ca(2+)-permeable divalent cation-selective channel inhibited by either lanthanum or gadolinium. Regulated by CPK32 to mediate Ca(2+) transport across the plasma membrane in response to Ca(2+) oscillation. The polypeptide is Cyclic nucleotide-gated ion channel 18 (Arabidopsis thaliana (Mouse-ear cress)).